We begin with the raw amino-acid sequence, 199 residues long: Glycerol-3-phosphate acyltransferase (199 aa).

5 consecutive transmembrane segments (helical) span residues 4-24 (FALFYMLFAYLLGSISSAILI), 56-76 (LAVLIFDMLKGMIPVWAGYYL), 80-100 (QFELGMVALGACLGHIFPIFF), 115-135 (IAPISWAVAGSMFGTWIFVFL), and 154-176 (YVWWFKPEFTFPVALVCCLLIYR).

The protein belongs to the PlsY family. Probably interacts with PlsX.

Its subcellular location is the cell inner membrane. It carries out the reaction an acyl phosphate + sn-glycerol 3-phosphate = a 1-acyl-sn-glycero-3-phosphate + phosphate. The protein operates within lipid metabolism; phospholipid metabolism. Functionally, catalyzes the transfer of an acyl group from acyl-phosphate (acyl-PO(4)) to glycerol-3-phosphate (G3P) to form lysophosphatidic acid (LPA). This enzyme utilizes acyl-phosphate as fatty acyl donor, but not acyl-CoA or acyl-ACP. The protein is Glycerol-3-phosphate acyltransferase of Haemophilus influenzae (strain PittGG).